We begin with the raw amino-acid sequence, 299 residues long: 4-hydroxybenzoate octaprenyltransferase (299 aa).

A run of 7 helical transmembrane segments spans residues 31 to 51 (IGIY…ADGL), 54 to 74 (WDVL…GCVI), 105 to 125 (VLFF…TNPL), 148 to 168 (QLPQ…AFAA), 177 to 197 (IWVL…FYAM), 241 to 261 (FGLG…FAYQ), and 277 to 297 (FLHN…DKLI).

Belongs to the UbiA prenyltransferase family. The cofactor is Mg(2+).

It localises to the cell inner membrane. The catalysed reaction is all-trans-octaprenyl diphosphate + 4-hydroxybenzoate = 4-hydroxy-3-(all-trans-octaprenyl)benzoate + diphosphate. Its pathway is cofactor biosynthesis; ubiquinone biosynthesis. Its function is as follows. Catalyzes the prenylation of para-hydroxybenzoate (PHB) with an all-trans polyprenyl group. Mediates the second step in the final reaction sequence of ubiquinone-8 (UQ-8) biosynthesis, which is the condensation of the polyisoprenoid side chain with PHB, generating the first membrane-bound Q intermediate 3-octaprenyl-4-hydroxybenzoate. The sequence is that of 4-hydroxybenzoate octaprenyltransferase from Saccharophagus degradans (strain 2-40 / ATCC 43961 / DSM 17024).